We begin with the raw amino-acid sequence, 837 residues long: Intestinal mucin-like protein (837 aa).

A run of 4 repeats spans residues proline 17 to threonine 27, proline 28 to threonine 38, proline 39 to threonine 50, and proline 51 to threonine 62. The segment at proline 17–threonine 70 is 5 X 11 AA approximate tandem repeats. Positions proline 17–leucine 75 are disordered. Residues threonine 29–threonine 70 show a composition bias toward low complexity. Residues proline 63–threonine 70 form a 5; truncated repeat. 2 N-linked (GlcNAc...) asparagine glycosylation sites follow: asparagine 91 and asparagine 164. The 184-residue stretch at cysteine 141–proline 324 folds into the VWFD domain. Cystine bridges form between cysteine 143–cysteine 284, cysteine 165–cysteine 323, and cysteine 189–cysteine 197. The interval proline 149–lysine 837 is probably important for disulfide-bond mediated mucin polymerization (link domain). Residues asparagine 278, asparagine 289, asparagine 344, asparagine 410, asparagine 444, asparagine 515, asparagine 538, asparagine 612, asparagine 627, asparagine 695, asparagine 727, and asparagine 749 are each glycosylated (N-linked (GlcNAc...) asparagine). VWFC domains lie at cysteine 472–lysine 543 and glycine 581–glutamine 648. Cystine bridges form between cysteine 732-cysteine 779, cysteine 746-cysteine 793, cysteine 755-cysteine 809, and cysteine 759-cysteine 811. The 86-residue stretch at cysteine 732–glutamate 817 folds into the CTCK domain.

As to quaternary structure, multimeric. As to expression, coats the epithelia of the intestines.

The protein resides in the secreted. In Rattus norvegicus (Rat), this protein is Intestinal mucin-like protein.